A 292-amino-acid chain; its full sequence is Glutamyl-Q tRNA(Asp) synthetase (292 aa).

Residues 11-15 (RFAPS) and glutamate 47 each bind L-glutamate. The short motif at 14 to 24 (PSPTGPLHFGS) is the 'HIGH' region element. Cysteine 103, cysteine 105, tyrosine 116, and cysteine 120 together coordinate Zn(2+). L-glutamate contacts are provided by tyrosine 173 and arginine 191. Residues 229 to 233 (KLSKQ) carry the 'KMSKS' region motif. ATP is bound at residue lysine 232.

Belongs to the class-I aminoacyl-tRNA synthetase family. GluQ subfamily. Zn(2+) is required as a cofactor.

Catalyzes the tRNA-independent activation of glutamate in presence of ATP and the subsequent transfer of glutamate onto a tRNA(Asp). Glutamate is transferred on the 2-amino-5-(4,5-dihydroxy-2-cyclopenten-1-yl) moiety of the queuosine in the wobble position of the QUC anticodon. The chain is Glutamyl-Q tRNA(Asp) synthetase from Acinetobacter baylyi (strain ATCC 33305 / BD413 / ADP1).